A 280-amino-acid chain; its full sequence is Formamidopyrimidine-DNA glycosylase (280 aa).

Pro-2 functions as the Schiff-base intermediate with DNA in the catalytic mechanism. Residue Glu-3 is the Proton donor of the active site. Lys-59 acts as the Proton donor; for beta-elimination activity in catalysis. Residues His-92 and Arg-111 each contribute to the DNA site. An FPG-type zinc finger spans residues 239 to 273 (NVYGQTGLPCNRCGTPIVKTKVAQRGTHYCPQCQQ). Arg-263 acts as the Proton donor; for delta-elimination activity in catalysis.

The protein belongs to the FPG family. As to quaternary structure, monomer. Zn(2+) is required as a cofactor.

The catalysed reaction is Hydrolysis of DNA containing ring-opened 7-methylguanine residues, releasing 2,6-diamino-4-hydroxy-5-(N-methyl)formamidopyrimidine.. It carries out the reaction 2'-deoxyribonucleotide-(2'-deoxyribose 5'-phosphate)-2'-deoxyribonucleotide-DNA = a 3'-end 2'-deoxyribonucleotide-(2,3-dehydro-2,3-deoxyribose 5'-phosphate)-DNA + a 5'-end 5'-phospho-2'-deoxyribonucleoside-DNA + H(+). Its function is as follows. Involved in base excision repair of DNA damaged by oxidation or by mutagenic agents. Acts as a DNA glycosylase that recognizes and removes damaged bases. Has a preference for oxidized purines, such as 7,8-dihydro-8-oxoguanine (8-oxoG). Has AP (apurinic/apyrimidinic) lyase activity and introduces nicks in the DNA strand. Cleaves the DNA backbone by beta-delta elimination to generate a single-strand break at the site of the removed base with both 3'- and 5'-phosphates. This is Formamidopyrimidine-DNA glycosylase from Enterococcus faecalis (strain ATCC 700802 / V583).